The primary structure comprises 251 residues: Hydroxyacylglutathione hydrolase (251 aa).

7 residues coordinate Zn(2+): H53, H55, D57, H58, H110, D127, and H165.

The protein belongs to the metallo-beta-lactamase superfamily. Glyoxalase II family. As to quaternary structure, monomer. Requires Zn(2+) as cofactor.

The catalysed reaction is an S-(2-hydroxyacyl)glutathione + H2O = a 2-hydroxy carboxylate + glutathione + H(+). Its pathway is secondary metabolite metabolism; methylglyoxal degradation; (R)-lactate from methylglyoxal: step 2/2. In terms of biological role, thiolesterase that catalyzes the hydrolysis of S-D-lactoyl-glutathione to form glutathione and D-lactic acid. The polypeptide is Hydroxyacylglutathione hydrolase (Escherichia coli O6:K15:H31 (strain 536 / UPEC)).